The following is a 395-amino-acid chain: 1-deoxy-D-xylulose 5-phosphate reductoisomerase (395 aa).

Residues threonine 10, glycine 11, serine 12, isoleucine 13, asparagine 38, and asparagine 122 each contribute to the NADPH site. Lysine 123 is a binding site for 1-deoxy-D-xylulose 5-phosphate. Residue glutamate 124 coordinates NADPH. Residue aspartate 148 participates in Mn(2+) binding. The 1-deoxy-D-xylulose 5-phosphate site is built by serine 149, glutamate 150, serine 178, and histidine 200. Glutamate 150 provides a ligand contact to Mn(2+). Position 206 (glycine 206) interacts with NADPH. 1-deoxy-D-xylulose 5-phosphate-binding residues include serine 213, asparagine 218, lysine 219, and glutamate 222. Glutamate 222 provides a ligand contact to Mn(2+).

Belongs to the DXR family. Requires Mg(2+) as cofactor. Mn(2+) is required as a cofactor.

It catalyses the reaction 2-C-methyl-D-erythritol 4-phosphate + NADP(+) = 1-deoxy-D-xylulose 5-phosphate + NADPH + H(+). It participates in isoprenoid biosynthesis; isopentenyl diphosphate biosynthesis via DXP pathway; isopentenyl diphosphate from 1-deoxy-D-xylulose 5-phosphate: step 1/6. Functionally, catalyzes the NADPH-dependent rearrangement and reduction of 1-deoxy-D-xylulose-5-phosphate (DXP) to 2-C-methyl-D-erythritol 4-phosphate (MEP). The chain is 1-deoxy-D-xylulose 5-phosphate reductoisomerase from Elusimicrobium minutum (strain Pei191).